The chain runs to 118 residues: MARIAGINIPDQKHTVIALTGIFGIGRTRARAICATTSIAEDAKIKELSEAQIDTLREAVAEYTVEGDLRREVSMNIKRLMDLGCYRGIRHRRSLPLRGQRTKTNARTRKGPRKPIRK.

Residues 94 to 118 (SLPLRGQRTKTNARTRKGPRKPIRK) are disordered.

It belongs to the universal ribosomal protein uS13 family. As to quaternary structure, part of the 30S ribosomal subunit. Forms a loose heterodimer with protein S19. Forms two bridges to the 50S subunit in the 70S ribosome.

Functionally, located at the top of the head of the 30S subunit, it contacts several helices of the 16S rRNA. In the 70S ribosome it contacts the 23S rRNA (bridge B1a) and protein L5 of the 50S subunit (bridge B1b), connecting the 2 subunits; these bridges are implicated in subunit movement. Contacts the tRNAs in the A and P-sites. This Shewanella sediminis (strain HAW-EB3) protein is Small ribosomal subunit protein uS13.